A 484-amino-acid chain; its full sequence is Glycogen synthase (484 aa).

K15 serves as a coordination point for ADP-alpha-D-glucose.

The protein belongs to the glycosyltransferase 1 family. Bacterial/plant glycogen synthase subfamily.

It carries out the reaction [(1-&gt;4)-alpha-D-glucosyl](n) + ADP-alpha-D-glucose = [(1-&gt;4)-alpha-D-glucosyl](n+1) + ADP + H(+). Its pathway is glycan biosynthesis; glycogen biosynthesis. Synthesizes alpha-1,4-glucan chains using ADP-glucose. This is Glycogen synthase from Anoxybacillus flavithermus (strain DSM 21510 / WK1).